We begin with the raw amino-acid sequence, 473 residues long: Mitochondrial distribution and morphology protein 10 (473 aa).

This sequence belongs to the MDM10 family. In terms of assembly, component of the ER-mitochondria encounter structure (ERMES) or MDM complex, composed of MMM1, MDM10, MDM12 and MDM34. Associates with the mitochondrial outer membrane sorting assembly machinery SAM(core) complex.

The protein localises to the mitochondrion outer membrane. Functionally, component of the ERMES/MDM complex, which serves as a molecular tether to connect the endoplasmic reticulum and mitochondria. Components of this complex are involved in the control of mitochondrial shape and protein biogenesis and may function in phospholipid exchange. MDM10 is involved in the late assembly steps of the general translocase of the mitochondrial outer membrane (TOM complex). Functions in the TOM40-specific route of the assembly of outer membrane beta-barrel proteins, including the association of TOM40 with the receptor TOM22 and small TOM proteins. Can associate with the SAM(core) complex as well as the MDM12-MMM1 complex, both involved in late steps of the major beta-barrel assembly pathway, that is responsible for biogenesis of all outer membrane beta-barrel proteins. May act as a switch that shuttles between both complexes and channels precursor proteins into the TOM40-specific pathway. Plays a role in mitochondrial morphology and in the inheritance of mitochondria. The polypeptide is Mitochondrial distribution and morphology protein 10 (Candida albicans (strain WO-1) (Yeast)).